The following is an 865-amino-acid chain: AdoMet-dependent rRNA methyltransferase SPB1 (865 aa).

The S-adenosyl-L-methionine site is built by Gly56, Trp58, Asp76, Asp92, and Asp117. Catalysis depends on Lys157, which acts as the Proton acceptor. Coiled-coil stretches lie at residues 358-400 (ESMD…VRMQ) and 462-492 (GETD…RKAA). 2 disordered regions span residues 370 to 396 (LEKL…QKDI) and 443 to 676 (VVAS…TKDG). Positions 386-396 (RKENERKQKDI) are enriched in basic and acidic residues. The span at 463–483 (ETDDESDEELDRLETELDDMY) shows a compositional bias: acidic residues. Residues 484–497 (DQFRERKAASDAKY) are compositionally biased toward basic and acidic residues. Residues 526 to 545 (ISDDSELEEESSGDSDDEDD) show a composition bias toward acidic residues. The span at 556-566 (LDTTPSDNSGL) shows a compositional bias: polar residues. Positions 600 to 609 (GEDEDADMED) are enriched in acidic residues. Basic and acidic residues-rich tracts occupy residues 610-627 (TVSK…ADKK) and 659-676 (KSGK…TKDG). Residues 762-789 (REAKGRKKMKAAQRLEKLKKKSDLLVNE) adopt a coiled-coil conformation.

Belongs to the class I-like SAM-binding methyltransferase superfamily. RNA methyltransferase RlmE family. SPB1 subfamily. Component of the nucleolar and nucleoplasmic pre-60S ribosomal particle.

The protein resides in the nucleus. The protein localises to the nucleolus. The enzyme catalyses a ribonucleotide in rRNA + S-adenosyl-L-methionine = a 2'-O-methylribonucleotide in rRNA + S-adenosyl-L-homocysteine + H(+). Functionally, required for proper assembly of pre-ribosomal particles during the biogenesis of the 60S ribosomal subunit. In Pyricularia oryzae (strain 70-15 / ATCC MYA-4617 / FGSC 8958) (Rice blast fungus), this protein is AdoMet-dependent rRNA methyltransferase SPB1.